We begin with the raw amino-acid sequence, 271 residues long: Fatty acid elongase 2 (271 aa).

A helical transmembrane segment spans residues 16 to 36 (WMIDNVDVAGFLCLLYLGLVW). N-linked (GlcNAc...) asparagine glycosylation occurs at asparagine 52. The next 2 membrane-spanning stretches (helical) occupy residues 59-79 (VFIM…IVVV) and 110-130 (FWVG…VLLV). Residues 140–144 (HWYHH) carry the HxxHH motif motif. Catalysis depends on histidine 143, which acts as the Nucleophile. Helical transmembrane passes span 162–182 (IFVF…YFAM), 194–214 (IAPV…AVTM), and 241–261 (GVVM…ESYL).

This sequence belongs to the ELO family.

It localises to the endoplasmic reticulum membrane. It carries out the reaction an acyl-CoA + malonyl-CoA + H(+) = a 3-oxoacyl-CoA + CO2 + CoA. Its pathway is lipid metabolism; fatty acid biosynthesis. In terms of biological role, involved in the synthesis of fatty acids. Elongates C10 fatty acids to C14. The sequence is that of Fatty acid elongase 2 from Trypanosoma brucei brucei (strain 927/4 GUTat10.1).